A 179-amino-acid polypeptide reads, in one-letter code: Bifunctional protein PyrR (179 aa).

The PRPP-binding signature appears at 97-109; sequence VILIDDVLFTGRT.

The protein belongs to the purine/pyrimidine phosphoribosyltransferase family. PyrR subfamily.

It carries out the reaction UMP + diphosphate = 5-phospho-alpha-D-ribose 1-diphosphate + uracil. Its function is as follows. Regulates the transcription of the pyrimidine nucleotide (pyr) operon in response to exogenous pyrimidines. In terms of biological role, also displays a weak uracil phosphoribosyltransferase activity which is not physiologically significant. The chain is Bifunctional protein PyrR from Actinobacillus pleuropneumoniae serotype 5b (strain L20).